Here is a 450-residue protein sequence, read N- to C-terminus: Trehalose/maltose-binding protein MalE (450 aa).

An N-terminal signal peptide occupies residues 1-24; that stretch reads MNVKKVLLGLFLVGVLGIAVVASG. Alpha,alpha-trehalose is bound by residues Glu57, Thr84, Arg89, Asp110, Tyr161, Asp163, Tyr217, Glu279, Trp297, Tyr299, Gly334, Trp335, Trp371, and Arg404.

This sequence belongs to the bacterial solute-binding protein 1 family. The complex is composed of two ATP-binding proteins (MalK), two transmembrane proteins (MalG and MalF) and a solute-binding protein (MalE). In terms of processing, glycosylated.

It is found in the cell membrane. In terms of biological role, part of the ABC transporter complex MalEFGK involved in trehalose/maltose import. Binds maltose and trehalose. This Thermococcus litoralis (strain ATCC 51850 / DSM 5473 / JCM 8560 / NS-C) protein is Trehalose/maltose-binding protein MalE (malE).